The primary structure comprises 276 residues: Probable endonuclease 4 (276 aa).

His-66, His-106, Glu-141, Asp-175, His-178, His-210, Asp-223, His-225, and Glu-255 together coordinate Zn(2+).

It belongs to the AP endonuclease 2 family. Requires Zn(2+) as cofactor.

It carries out the reaction Endonucleolytic cleavage to 5'-phosphooligonucleotide end-products.. Its function is as follows. Endonuclease IV plays a role in DNA repair. It cleaves phosphodiester bonds at apurinic or apyrimidinic (AP) sites, generating a 3'-hydroxyl group and a 5'-terminal sugar phosphate. In Heliobacterium modesticaldum (strain ATCC 51547 / Ice1), this protein is Probable endonuclease 4.